Consider the following 333-residue polypeptide: Glycerol-3-phosphate dehydrogenase [NAD(P)+] (333 aa).

NADPH-binding residues include Ser-10, Trp-11, His-31, Arg-32, and Lys-105. Sn-glycerol 3-phosphate-binding residues include Lys-105, Gly-136, and Ser-138. Ala-140 is an NADPH binding site. Residues Lys-191, Asp-244, Ser-254, Arg-255, and Asn-256 each coordinate sn-glycerol 3-phosphate. Lys-191 (proton acceptor) is an active-site residue. An NADPH-binding site is contributed by Arg-255. NADPH is bound by residues Ile-279 and Glu-281.

It belongs to the NAD-dependent glycerol-3-phosphate dehydrogenase family.

The protein localises to the cytoplasm. It catalyses the reaction sn-glycerol 3-phosphate + NAD(+) = dihydroxyacetone phosphate + NADH + H(+). The enzyme catalyses sn-glycerol 3-phosphate + NADP(+) = dihydroxyacetone phosphate + NADPH + H(+). Its pathway is membrane lipid metabolism; glycerophospholipid metabolism. Catalyzes the reduction of the glycolytic intermediate dihydroxyacetone phosphate (DHAP) to sn-glycerol 3-phosphate (G3P), the key precursor for phospholipid synthesis. This Pelodictyon phaeoclathratiforme (strain DSM 5477 / BU-1) protein is Glycerol-3-phosphate dehydrogenase [NAD(P)+].